A 365-amino-acid chain; its full sequence is Chorismate synthase (365 aa).

The NADP(+) site is built by Arg-48 and Arg-54. FMN-binding positions include 129–131 (RSS), 241–242 (NA), Gly-285, 300–304 (KPTSS), and Arg-326.

It belongs to the chorismate synthase family. Homotetramer. The cofactor is FMNH2.

The catalysed reaction is 5-O-(1-carboxyvinyl)-3-phosphoshikimate = chorismate + phosphate. It participates in metabolic intermediate biosynthesis; chorismate biosynthesis; chorismate from D-erythrose 4-phosphate and phosphoenolpyruvate: step 7/7. In terms of biological role, catalyzes the anti-1,4-elimination of the C-3 phosphate and the C-6 proR hydrogen from 5-enolpyruvylshikimate-3-phosphate (EPSP) to yield chorismate, which is the branch point compound that serves as the starting substrate for the three terminal pathways of aromatic amino acid biosynthesis. This reaction introduces a second double bond into the aromatic ring system. The sequence is that of Chorismate synthase from Parvibaculum lavamentivorans (strain DS-1 / DSM 13023 / NCIMB 13966).